A 547-amino-acid polypeptide reads, in one-letter code: Malolactic enzyme (547 aa).

Catalysis depends on Tyr92, which acts as the Proton donor. Lys165 serves as the catalytic Proton acceptor. A substrate-binding site is contributed by Lys165. Residues Glu236, Asp237, and Asp260 each coordinate Mn(2+). NAD(+) contacts are provided by residues 293 to 296 (AGTA), Asn405, and Asn450. Position 450 (Asn450) interacts with substrate.

This sequence belongs to the malic enzymes family. As to quaternary structure, homodimer. Requires Mn(2+) as cofactor. NAD(+) serves as cofactor.

It catalyses the reaction (S)-malate + H(+) = (S)-lactate + CO2. Functionally, involved in the malolactic fermentation (MLF) of wine, which results in a natural decrease in acidity and favorable changes in wine flavors. Catalyzes the decarboxylation of L-malate to L-lactate. This Lactiplantibacillus plantarum (strain ATCC BAA-793 / NCIMB 8826 / WCFS1) (Lactobacillus plantarum) protein is Malolactic enzyme.